The sequence spans 127 residues: Putative truncated L-serine dehydratase YIL168W (127 aa).

N6-(pyridoxal phosphate)lysine is present on Lys39.

It belongs to the serine/threonine dehydratase family. Pyridoxal 5'-phosphate serves as cofactor.

The protein localises to the cytoplasm. It catalyses the reaction L-serine = pyruvate + NH4(+). Its pathway is carbohydrate biosynthesis; gluconeogenesis. In Saccharomyces cerevisiae (strain ATCC 204508 / S288c) (Baker's yeast), this protein is Putative truncated L-serine dehydratase YIL168W.